A 225-amino-acid chain; its full sequence is UPF0758 protein XAC3915 (225 aa).

The MPN domain occupies 102 to 224 (ALSDPPSVGR…PVSFAERGWL (123 aa)). Residues His173, His175, and Asp186 each coordinate Zn(2+). The JAMM motif signature appears at 173–186 (HNHPSGNPEPSEAD).

The protein belongs to the UPF0758 family.

The chain is UPF0758 protein XAC3915 from Xanthomonas axonopodis pv. citri (strain 306).